We begin with the raw amino-acid sequence, 418 residues long: Acetylornithine aminotransferase (418 aa).

Residues 116 to 117 and phenylalanine 149 contribute to the pyridoxal 5'-phosphate site; that span reads GA. Arginine 152 lines the N(2)-acetyl-L-ornithine pocket. Pyridoxal 5'-phosphate is bound at residue 240–243; that stretch reads DEVQ. N6-(pyridoxal phosphate)lysine is present on lysine 269. Serine 296 is a binding site for N(2)-acetyl-L-ornithine. Threonine 297 is a binding site for pyridoxal 5'-phosphate.

This sequence belongs to the class-III pyridoxal-phosphate-dependent aminotransferase family. ArgD subfamily. As to quaternary structure, homodimer. Pyridoxal 5'-phosphate is required as a cofactor.

Its subcellular location is the cytoplasm. The catalysed reaction is N(2)-acetyl-L-ornithine + 2-oxoglutarate = N-acetyl-L-glutamate 5-semialdehyde + L-glutamate. The protein operates within amino-acid biosynthesis; L-arginine biosynthesis; N(2)-acetyl-L-ornithine from L-glutamate: step 4/4. This is Acetylornithine aminotransferase from Prochlorococcus marinus (strain MIT 9313).